The primary structure comprises 205 residues: Ephrin-A1 (205 aa).

The first 17 residues, 1-17, serve as a signal peptide directing secretion; sequence MEFLWAPLLGLCCSLAA. One can recognise an Ephrin RBD domain in the interval 18–161; the sequence is ADRHIVFWNS…THNPQAHVNP (144 aa). A glycan (N-linked (GlcNAc...) asparagine) is linked at Asn-26. Cystine bridges form between Cys-51-Cys-92 and Cys-80-Cys-140. Ser-182 carries the GPI-anchor amidated serine lipid modification. Positions 183–205 are cleaved as a propeptide — removed in mature form; sequence AAPRLFPLVWAVLLLPLLLLQSQ.

This sequence belongs to the ephrin family. Monomer. Homodimer. Forms heterodimers with EPHA2. Binds to the receptor tyrosine kinases EPHA2, EPHA3, EPHA4, EPHA5, EPHA6 and EPHA7. Also binds with low affinity to EPHA1. Post-translationally, undergoes proteolysis by a metalloprotease to give rise to a soluble monomeric form. In terms of processing, N-Glycosylation is required for binding to EPHA2 receptor and inducing its internalization. Expressed in myogenic progenitor cells.

It is found in the cell membrane. Its subcellular location is the secreted. Cell surface GPI-bound ligand for Eph receptors, a family of receptor tyrosine kinases which are crucial for migration, repulsion and adhesion during neuronal, vascular and epithelial development. Binds promiscuously Eph receptors residing on adjacent cells, leading to contact-dependent bidirectional signaling into neighboring cells. Plays an important role in angiogenesis and tumor neovascularization. The recruitment of VAV2, VAV3 and PI3-kinase p85 subunit by phosphorylated EPHA2 is critical for EFNA1-induced RAC1 GTPase activation and vascular endothelial cell migration and assembly. Exerts anti-oncogenic effects in tumor cells through activation and down-regulation of EPHA2. Activates EPHA2 by inducing tyrosine phosphorylation which leads to its internalization and degradation. Acts as a negative regulator in the tumorigenesis of gliomas by down-regulating EPHA2 and FAK. Can evoke collapse of embryonic neuronal growth cone and regulates dendritic spine morphogenesis. This Mus musculus (Mouse) protein is Ephrin-A1 (Efna1).